The following is a 328-amino-acid chain: Hairy/enhancer-of-split related with YRPW motif-like protein (328 aa).

The interval 1-57 (MKRPKEPSGSDGESDGPIDVGQEGQLSQMARPLSTPSSSQMQARKKHRGIIEKRRRD) is disordered. Residues 24 to 42 (GQLSQMARPLSTPSSSQMQ) show a composition bias toward polar residues. Residues 42–111 (QARKKHRGII…GGTGFFDARA (70 aa)) are transcriptional repression and interaction with NCOR1 and SIN3A. The region spanning 43–98 (ARKKHRGIIEKRRRDRINSSLSELRRLVPTAFEKQGSSKLEKAEVLQMTVDHLKML) is the bHLH domain. The region spanning 116–153 (FRSIGFRECLTEVIRYLGVLEGPSSRADPVRIRLLSHL) is the Orange domain. Positions 239-308 (SRGASSTRRA…NSSSPGPAGR (70 aa)) are disordered. The span at 261 to 270 (APSSRAARSS) shows a compositional bias: low complexity.

This sequence belongs to the HEY family. Self-associates. Interacts with GATA4, GATA6, HES1, HEY1 and HEY2. Interacts with HDAC1, NCOR1 and SIN3A.

It localises to the nucleus. Downstream effector of Notch signaling which may be required for cardiovascular development. Transcriptional repressor which binds preferentially to the canonical E box sequence 5'-CACGTG-3'. Represses transcription by the cardiac transcriptional activators GATA4 and GATA6. This is Hairy/enhancer-of-split related with YRPW motif-like protein (HEYL) from Homo sapiens (Human).